A 210-amino-acid polypeptide reads, in one-letter code: Probable septum site-determining protein MinC (210 aa).

This sequence belongs to the MinC family. As to quaternary structure, interacts with MinD and FtsZ.

In terms of biological role, cell division inhibitor that blocks the formation of polar Z ring septums. Rapidly oscillates between the poles of the cell to destabilize FtsZ filaments that have formed before they mature into polar Z rings. Prevents FtsZ polymerization. The polypeptide is Probable septum site-determining protein MinC (Clostridium novyi (strain NT)).